A 354-amino-acid polypeptide reads, in one-letter code: G-protein coupled receptor homolog US28 (354 aa).

At 1 to 37 (MTPTTTTAELTTEFDYDEDATPCVFTDVLNQSKPVTL) the chain is on the extracellular side. N30 carries N-linked (GlcNAc...) asparagine; by host glycosylation. Residues 38-58 (FLYGVVFLFGSIGNFLVIFTI) form a helical membrane-spanning segment. The Cytoplasmic segment spans residues 59 to 69 (TWRRRIQCSGD). A helical transmembrane segment spans residues 70 to 90 (VYFINLAAADLLFVCTLPLWM). Residues 91 to 101 (QYLLDHNSLAS) lie on the Extracellular side of the membrane. Residues 102–122 (VPCTLLTACFYVAMFASLCFI) traverse the membrane as a helical segment. Residues 123 to 145 (TEIALDRYYAIVYMRYRPVKQAC) are Cytoplasmic-facing. Residues 146-166 (LFSIFWWIFAVIIAIPHFMVV) form a helical membrane-spanning segment. At 167-183 (TKKDNQCMTDYDYLEVS) the chain is on the extracellular side. The chain crosses the membrane as a helical span at residues 184 to 204 (YPIILNVELMLGAFVIPLSVI). The Cytoplasmic segment spans residues 205–228 (SYCYYRISRIVAVSQSRHKGRIVR). The helical transmembrane segment at 229 to 249 (VLIAVVLVFIIFWLPYHLTLF) threads the bilayer. Topologically, residues 250 to 273 (VDTLKLLKWISSSCEFERSLKRAL) are extracellular. Residues 274 to 294 (ILTESLAFCHCCLNPLLYVFV) traverse the membrane as a helical segment. The Cytoplasmic portion of the chain corresponds to 295–354 (GTKFRQELHCLLAEFRQRLFSRDVSWYHSMSFSRRSSPSRRETSSDTLSDEVCRVSQIIP).

It belongs to the G-protein coupled receptor 1 family. As to quaternary structure, interacts with host GPRASP1; this interaction targets US28 to lysosomes for degradation. Interacts with host CX3CL1/Fractalkine (via N-terminus). Interacts with host Gi alpha-1 subunit GNAI1; this interaction does not lead to the catalytic activation of Gi complex. Phosphorylated. High phosphorylation occurs concomitantly with receptor endocytosis and correlate with low receptor presence at the plasma membrane.

Its subcellular location is the host cell membrane. Its function is as follows. Binds to a great number of different CC-chemokines including CCL5/RANTES, CCL2/MCP-1, CCL3/MIP-1-alpha as well as CX3CL1/Fractalkine. Transduces signals resulting in the activation of MAP kinase signaling pathways and augmentation of intracellular calcium ion levels, leading to alterations in chemotactic behavior of vascular smooth muscle cells and macrophages. The US28 receptor also exhibits high levels of agonist-independent signaling activity and agonist-independent endocytosis. Interacts with the host Gi complex without activating it, thereby probably interfering with the chemokine-Gi signaling. May also function as a G protein sink to sequester G protein from the cell surface via internalization. Interacts with endogenous Gaq/11 subunits and thereby constitutively activates phospholipase C. The chain is G-protein coupled receptor homolog US28 (US28) from Homo sapiens (Human).